Consider the following 151-residue polypeptide: uncharacterized protein (151 aa).

This sequence to B.subtilis pcf and to sigma factors.

This is an uncharacterized protein from Bacillus subtilis (strain 168).